A 140-amino-acid polypeptide reads, in one-letter code: TPT1-like protein (140 aa).

A TCTP domain is found at 6–140 (MITYWDLISH…LANFKNYQKT (135 aa)).

The protein belongs to the TCTP family.

The sequence is that of TPT1-like protein from Homo sapiens (Human).